The chain runs to 449 residues: Tubulin beta-4 chain (449 aa).

Positions 1 to 4 (MREI) match the MREI motif motif. GTP-binding residues include Gln-11, Glu-69, Ser-138, Gly-142, Thr-143, Gly-144, Asn-204, and Asn-226. Glu-69 contributes to the Mg(2+) binding site. The disordered stretch occupies residues 421–449 (EYQQYQDATAEEEGEMYEDDEEESEQGAK). Residues 429–449 (TAEEEGEMYEDDEEESEQGAK) are compositionally biased toward acidic residues. Glu-438 carries the 5-glutamyl polyglutamate modification. Position 444 is a phosphoserine (Ser-444).

This sequence belongs to the tubulin family. Dimer of alpha and beta chains. A typical microtubule is a hollow water-filled tube with an outer diameter of 25 nm and an inner diameter of 15 nM. Alpha-beta heterodimers associate head-to-tail to form protofilaments running lengthwise along the microtubule wall with the beta-tubulin subunit facing the microtubule plus end conferring a structural polarity. Microtubules usually have 13 protofilaments but different protofilament numbers can be found in some organisms and specialized cells. Requires Mg(2+) as cofactor. Some glutamate residues at the C-terminus are polyglycylated, resulting in polyglycine chains on the gamma-carboxyl group. Glycylation is mainly limited to tubulin incorporated into axonemes (cilia and flagella) whereas glutamylation is prevalent in neuronal cells, centrioles, axonemes, and the mitotic spindle. Both modifications can coexist on the same protein on adjacent residues, and lowering polyglycylation levels increases polyglutamylation, and reciprocally. The precise function of polyglycylation is still unclear. In terms of processing, some glutamate residues at the C-terminus are polyglutamylated, resulting in polyglutamate chains on the gamma-carboxyl group. Polyglutamylation plays a key role in microtubule severing by spastin (SPAST). SPAST preferentially recognizes and acts on microtubules decorated with short polyglutamate tails: severing activity by SPAST increases as the number of glutamates per tubulin rises from one to eight, but decreases beyond this glutamylation threshold. In terms of tissue distribution, neuron specific.

Its subcellular location is the cytoplasm. The protein localises to the cytoskeleton. Tubulin is the major constituent of microtubules, a cylinder consisting of laterally associated linear protofilaments composed of alpha- and beta-tubulin heterodimers. Microtubules grow by the addition of GTP-tubulin dimers to the microtubule end, where a stabilizing cap forms. Below the cap, tubulin dimers are in GDP-bound state, owing to GTPase activity of alpha-tubulin. The polypeptide is Tubulin beta-4 chain (Gallus gallus (Chicken)).